A 132-amino-acid chain; its full sequence is Rubredoxin-1 (132 aa).

The Rubredoxin-like domain maps to 1–53 (MSRYQCPDCQYIYDENKGEPHEGFHPNTSWNDIPKDWACPDCAVRDKVDFIFL). 4 residues coordinate Fe cation: Cys6, Cys9, Cys39, and Cys42. A disordered region spans residues 108 to 132 (TEVLDQASTPQVVRKSSTRKKMRNK). Polar residues predominate over residues 113 to 122 (QASTPQVVRK). A compositionally biased stretch (basic residues) spans 123-132 (SSTRKKMRNK).

Belongs to the rubredoxin family. Fe(3+) is required as a cofactor.

It is found in the cytoplasm. It participates in hydrocarbon metabolism; alkane degradation. Not known. Probably involved in an electron transport pathway, but not required for the hydrocarbon hydroxylating system. Seems to be non-functional. The sequence is that of Rubredoxin-1 (alkF) from Ectopseudomonas oleovorans (Pseudomonas oleovorans).